The chain runs to 451 residues: Zinc metalloproteinase nas-16 (451 aa).

The region spanning 70–273 (QVVTKLFSPQ…LTINTAYNCK (204 aa)) is the Peptidase M12A domain. 4 cysteine pairs are disulfide-bonded: C127–C272, C148–C167, C274–C291, and C296–C305. An N-linked (GlcNAc...) asparagine glycan is attached at N133. H175 contacts Zn(2+). Residue E176 is part of the active site. The Zn(2+) site is built by H179 and H185. Positions 267–306 (NTAYNCKCPSELLCANGGYTNPSNCLECICPLGYGGVLCD) constitute an EGF-like domain. Residues N363 and N438 are each glycosylated (N-linked (GlcNAc...) asparagine).

Zn(2+) serves as cofactor.

The protein localises to the secreted. Functionally, metalloprotease. The sequence is that of Zinc metalloproteinase nas-16 (nas-16) from Caenorhabditis elegans.